The following is a 408-amino-acid chain: LL-diaminopimelate aminotransferase (408 aa).

2 residues coordinate substrate: Tyr15 and Gly42. Pyridoxal 5'-phosphate is bound by residues Tyr72, 108–109, Tyr132, Asn187, Tyr218, and 246–248; these read SK and SFS. Residues Lys109, Tyr132, and Asn187 each coordinate substrate. Lys249 carries the N6-(pyridoxal phosphate)lysine modification. The pyridoxal 5'-phosphate site is built by Arg257 and Asn292. The substrate site is built by Asn292 and Arg388.

This sequence belongs to the class-I pyridoxal-phosphate-dependent aminotransferase family. LL-diaminopimelate aminotransferase subfamily. In terms of assembly, homodimer. Pyridoxal 5'-phosphate serves as cofactor.

It catalyses the reaction (2S,6S)-2,6-diaminopimelate + 2-oxoglutarate = (S)-2,3,4,5-tetrahydrodipicolinate + L-glutamate + H2O + H(+). The protein operates within amino-acid biosynthesis; L-lysine biosynthesis via DAP pathway; LL-2,6-diaminopimelate from (S)-tetrahydrodipicolinate (aminotransferase route): step 1/1. In terms of biological role, involved in the synthesis of meso-diaminopimelate (m-DAP or DL-DAP), required for both lysine and peptidoglycan biosynthesis. Catalyzes the direct conversion of tetrahydrodipicolinate to LL-diaminopimelate. The chain is LL-diaminopimelate aminotransferase from Parasynechococcus marenigrum (strain WH8102).